The primary structure comprises 88 residues: Small ribosomal subunit protein uS15 (88 aa).

Belongs to the universal ribosomal protein uS15 family. Part of the 30S ribosomal subunit. Forms a bridge to the 50S subunit in the 70S ribosome, contacting the 23S rRNA.

Functionally, one of the primary rRNA binding proteins, it binds directly to 16S rRNA where it helps nucleate assembly of the platform of the 30S subunit by binding and bridging several RNA helices of the 16S rRNA. In terms of biological role, forms an intersubunit bridge (bridge B4) with the 23S rRNA of the 50S subunit in the ribosome. The polypeptide is Small ribosomal subunit protein uS15 (Geotalea uraniireducens (strain Rf4) (Geobacter uraniireducens)).